Here is a 269-residue protein sequence, read N- to C-terminus: Tryptophan synthase alpha chain (269 aa).

Residues E49 and D60 each act as proton acceptor in the active site.

The protein belongs to the TrpA family. As to quaternary structure, tetramer of two alpha and two beta chains.

The enzyme catalyses (1S,2R)-1-C-(indol-3-yl)glycerol 3-phosphate + L-serine = D-glyceraldehyde 3-phosphate + L-tryptophan + H2O. It participates in amino-acid biosynthesis; L-tryptophan biosynthesis; L-tryptophan from chorismate: step 5/5. In terms of biological role, the alpha subunit is responsible for the aldol cleavage of indoleglycerol phosphate to indole and glyceraldehyde 3-phosphate. The polypeptide is Tryptophan synthase alpha chain (Acidovorax ebreus (strain TPSY) (Diaphorobacter sp. (strain TPSY))).